The chain runs to 161 residues: Peptidyl-prolyl cis-trans isomerase (161 aa).

A PPIase cyclophilin-type domain is found at 6-160 (FFDIKAGDER…KKIIIEDCGE (155 aa)).

Belongs to the cyclophilin-type PPIase family. PPIase A subfamily. As to expression, found mainly in the tegument, gut epithelium, and muscle layers. Also found in the interior of the parasite.

The enzyme catalyses [protein]-peptidylproline (omega=180) = [protein]-peptidylproline (omega=0). Binds cyclosporin A (CsA). CsA mediates some of its effects via an inhibitory action on PPIase. In terms of biological role, PPIases accelerate the folding of proteins. It catalyzes the cis-trans isomerization of proline imidic peptide bonds in oligopeptides. This Schistosoma mansoni (Blood fluke) protein is Peptidyl-prolyl cis-trans isomerase.